The sequence spans 596 residues: Elongation factor 4 (596 aa).

A tr-type G domain is found at Lys-2–Asn-183. Residues Asp-14 to Thr-19 and Asn-130 to Asp-133 contribute to the GTP site.

The protein belongs to the TRAFAC class translation factor GTPase superfamily. Classic translation factor GTPase family. LepA subfamily.

The protein resides in the cell inner membrane. The catalysed reaction is GTP + H2O = GDP + phosphate + H(+). In terms of biological role, required for accurate and efficient protein synthesis under certain stress conditions. May act as a fidelity factor of the translation reaction, by catalyzing a one-codon backward translocation of tRNAs on improperly translocated ribosomes. Back-translocation proceeds from a post-translocation (POST) complex to a pre-translocation (PRE) complex, thus giving elongation factor G a second chance to translocate the tRNAs correctly. Binds to ribosomes in a GTP-dependent manner. This is Elongation factor 4 from Wolinella succinogenes (strain ATCC 29543 / DSM 1740 / CCUG 13145 / JCM 31913 / LMG 7466 / NCTC 11488 / FDC 602W) (Vibrio succinogenes).